A 204-amino-acid chain; its full sequence is Kunitz-type trypsin inhibitor KTI2 (204 aa).

The first 25 residues, 1–25, serve as a signal peptide directing secretion; that stretch reads MKSTIFFALFLVCAFTISYLPSATA. 2 cysteine pairs are disulfide-bonded: cysteine 65–cysteine 112 and cysteine 160–cysteine 169.

The protein belongs to the protease inhibitor I3 (leguminous Kunitz-type inhibitor) family. Seed, and at low levels in leaf, root, and stem.

Has probably no trypsin inhibitor activity. KTi2 is responsible for most of the Kunitz trypsin inhibitor activity and protein found in soybean seeds. The protein is Kunitz-type trypsin inhibitor KTI2 (KTI2) of Glycine max (Soybean).